Reading from the N-terminus, the 108-residue chain is Large ribosomal subunit protein uL23 (108 aa).

Belongs to the universal ribosomal protein uL23 family. In terms of assembly, part of the 50S ribosomal subunit. Contacts protein L29, and trigger factor when it is bound to the ribosome.

Its function is as follows. One of the early assembly proteins it binds 23S rRNA. One of the proteins that surrounds the polypeptide exit tunnel on the outside of the ribosome. Forms the main docking site for trigger factor binding to the ribosome. The protein is Large ribosomal subunit protein uL23 of Leptothrix cholodnii (strain ATCC 51168 / LMG 8142 / SP-6) (Leptothrix discophora (strain SP-6)).